The following is a 349-amino-acid chain: Heat-inducible transcription repressor HrcA (349 aa).

Belongs to the HrcA family.

In terms of biological role, negative regulator of class I heat shock genes (grpE-dnaK-dnaJ and groELS operons). Prevents heat-shock induction of these operons. This is Heat-inducible transcription repressor HrcA from Mycoplasmoides gallisepticum (strain R(low / passage 15 / clone 2)) (Mycoplasma gallisepticum).